The primary structure comprises 266 residues: uncharacterized protein (266 aa).

A run of 4 helical transmembrane segments spans residues 9–29, 79–99, 122–142, and 193–213; these read IFII…IELP, GIMT…INPF, LSVM…MLSG, and GWYL…MVFI.

The protein resides in the membrane. This is an uncharacterized protein from Dictyostelium discoideum (Social amoeba).